Consider the following 383-residue polypeptide: Galactokinase (383 aa).

34–37 (EHTD) contributes to the substrate binding site. An ATP-binding site is contributed by 124-130 (GAGLSSS). 2 residues coordinate Mg(2+): Ser130 and Glu162. Residue Asp174 is the Proton acceptor of the active site. A substrate-binding site is contributed by Tyr223.

It belongs to the GHMP kinase family. GalK subfamily.

It is found in the cytoplasm. The catalysed reaction is alpha-D-galactose + ATP = alpha-D-galactose 1-phosphate + ADP + H(+). It participates in carbohydrate metabolism; galactose metabolism. Its function is as follows. Catalyzes the transfer of the gamma-phosphate of ATP to D-galactose to form alpha-D-galactose-1-phosphate (Gal-1-P). In Yersinia enterocolitica serotype O:8 / biotype 1B (strain NCTC 13174 / 8081), this protein is Galactokinase.